The primary structure comprises 211 residues: MQSAMFLAVQHDCVPMDKSAGNGPKVEEKREKMKRTLLKDWKTRLSYFLQNSSTPGKPKTGKKSKQQTFIKPSPEEALLWAEAFDELLASKYGLAAFRAFLKSEFCEENIEFWLACEDFKKTKSPQKLSSKARKIYTDFIEKEAPKEINIDFQTKTLIAQNIQEATSGCFTTAQKRVYSLMENNSYPRFLESEFYQDLCKKPQITTEPHAT.

Residues 32 to 66 (KMKRTLLKDWKTRLSYFLQNSSTPGKPKTGKKSKQ) form a necessary for membrane association region. Positions 79–116 (LWAEAFDELLASKYGLAAFRAFLKSEFCEENIEFWLAC) are necessary to inhibit protein synthesis. The RGS domain maps to 83 to 199 (AFDELLASKY…LESEFYQDLC (117 aa)).

As to quaternary structure, interacts with GNAQ. Does not interact with GNAI1 and GNAI3. Interacts with EIF2B5. Interacts with PRKG1 (isoform alpha). Phosphorylated by protein kinase C. Phosphorylation by PRKG1 leads to activation of RGS2 activity.

Its subcellular location is the cell membrane. It is found in the cytoplasm. It localises to the nucleus. The protein localises to the nucleolus. Regulates G protein-coupled receptor signaling cascades. Inhibits signal transduction by increasing the GTPase activity of G protein alpha subunits, thereby driving them into their inactive GDP-bound form. It is involved in the negative regulation of the angiotensin-activated signaling pathway. Plays a role in the regulation of blood pressure in response to signaling via G protein-coupled receptors and GNAQ. Plays a role in regulating the constriction and relaxation of vascular smooth muscle. Binds EIF2B5 and blocks its activity, thereby inhibiting the translation of mRNA into protein. In Rattus norvegicus (Rat), this protein is Regulator of G-protein signaling 2 (Rgs2).